The primary structure comprises 260 residues: Hydroxypyruvate/pyruvate aldolase Bphyt_0320 (260 aa).

His48 (proton acceptor) is an active-site residue. A divalent metal cation-binding residues include Glu157 and Asp183.

This sequence belongs to the HpcH/HpaI aldolase family. The cofactor is Mn(2+). Mg(2+) serves as cofactor. Co(2+) is required as a cofactor.

It catalyses the reaction D-glyceraldehyde + 3-hydroxypyruvate = 2-dehydro-D-gluconate. The catalysed reaction is D-glyceraldehyde + pyruvate = 2-dehydro-3-deoxy-L-galactonate. It carries out the reaction 2-dehydro-3-deoxy-D-gluconate = D-glyceraldehyde + pyruvate. In terms of biological role, aldolase which can catalyze in vitro the aldolisation reaction between hydroxypyruvate (HPA) or pyruvate (PA) and D-glyceraldehyde (D-GA). The condensation of hydroxypyruvate and D-glyceraldehyde produces 2-dehydro-D-gluconate. The condensation of pyruvate and D-glyceraldehyde produces 2-dehydro-3-deoxy-L-galactonate as the major product and 2-dehydro-3-deoxy-D-gluconate. Also catalyzes the retro-aldol type decarboxylation of oxaloacetate, a general property of known pyruvate aldolases. In Paraburkholderia phytofirmans (strain DSM 17436 / LMG 22146 / PsJN) (Burkholderia phytofirmans), this protein is Hydroxypyruvate/pyruvate aldolase Bphyt_0320.